The chain runs to 133 residues: Fatty acid-binding protein, heart (133 aa).

Residue Val2 is modified to N-acetylvaline. Thr8 is subject to Phosphothreonine. Position 20 is a phosphotyrosine; by Tyr-kinases (Tyr20). Ser23 is subject to Phosphoserine. Position 30 is a phosphothreonine (Thr30). Residue Ser83 is modified to Phosphoserine. Position 127 to 129 (127 to 129 (RTY)) interacts with (9Z)-octadecenoate. Residue 127-129 (RTY) coordinates hexadecanoate. 127–129 (RTY) provides a ligand contact to octadecanoate.

Belongs to the calycin superfamily. Fatty-acid binding protein (FABP) family.

It is found in the cytoplasm. In terms of biological role, FABPs are thought to play a role in the intracellular transport of long-chain fatty acids and their acyl-CoA esters. This Sus scrofa (Pig) protein is Fatty acid-binding protein, heart (FABP3).